Here is a 233-residue protein sequence, read N- to C-terminus: Zinc import ATP-binding protein ZnuC (233 aa).

The ABC transporter domain occupies isoleucine 6–leucine 222. Residue glycine 38–threonine 45 participates in ATP binding.

Belongs to the ABC transporter superfamily. Zinc importer (TC 3.A.1.15.5) family. As to quaternary structure, the complex is composed of two ATP-binding proteins (ZnuC), two transmembrane proteins (ZnuB) and a solute-binding protein (ZnuA).

It is found in the cell inner membrane. It catalyses the reaction Zn(2+)(out) + ATP(in) + H2O(in) = Zn(2+)(in) + ADP(in) + phosphate(in) + H(+)(in). In terms of biological role, part of the ABC transporter complex ZnuABC involved in zinc import. Responsible for energy coupling to the transport system. This Rickettsia bellii (strain RML369-C) protein is Zinc import ATP-binding protein ZnuC.